The chain runs to 167 residues: Probable host range protein 2 (167 aa).

This sequence belongs to the poxviridae C7 protein family.

In terms of biological role, plays a role for multiplication of the virus in different cell types. The polypeptide is Probable host range protein 2 (Yaba monkey tumor virus (strain VR587) (YMTV)).